The primary structure comprises 298 residues: Elongation factor Ts (298 aa).

The interval threonine 80–valine 83 is involved in Mg(2+) ion dislocation from EF-Tu.

It belongs to the EF-Ts family.

Its subcellular location is the cytoplasm. Functionally, associates with the EF-Tu.GDP complex and induces the exchange of GDP to GTP. It remains bound to the aminoacyl-tRNA.EF-Tu.GTP complex up to the GTP hydrolysis stage on the ribosome. The chain is Elongation factor Ts from Acidovorax sp. (strain JS42).